Here is a 290-residue protein sequence, read N- to C-terminus: Purine nucleoside phosphorylase (290 aa).

Position 68 to 69 (68 to 69) interacts with phosphate; sequence RN. M204 contacts substrate. Residue T205 participates in phosphate binding.

This sequence belongs to the PNP/MTAP phosphorylase family. MTAP subfamily. As to quaternary structure, homotrimer.

Its subcellular location is the cytoplasm. The protein resides in the nucleus. It catalyses the reaction a purine D-ribonucleoside + phosphate = a purine nucleobase + alpha-D-ribose 1-phosphate. Its pathway is purine metabolism; purine nucleoside salvage. In terms of biological role, purine nucleoside phosphorylase involved in purine salvage. The protein is Purine nucleoside phosphorylase of Drosophila melanogaster (Fruit fly).